The primary structure comprises 376 residues: Glutamate 5-kinase (376 aa).

Lysine 15 contacts ATP. Substrate-binding residues include serine 56, aspartate 143, and asparagine 155. ATP is bound at residue 175–176 (SD). In terms of domain architecture, PUA spans 281 to 358 (KGTLTIDAGA…PDVMMILGIS (78 aa)).

It belongs to the glutamate 5-kinase family.

It localises to the cytoplasm. It carries out the reaction L-glutamate + ATP = L-glutamyl 5-phosphate + ADP. It functions in the pathway amino-acid biosynthesis; L-proline biosynthesis; L-glutamate 5-semialdehyde from L-glutamate: step 1/2. In terms of biological role, catalyzes the transfer of a phosphate group to glutamate to form L-glutamate 5-phosphate. This chain is Glutamate 5-kinase, found in Rhodopseudomonas palustris (strain BisB5).